The following is a 547-amino-acid chain: Glucose-6-phosphate isomerase (547 aa).

The active-site Proton donor is E351. Catalysis depends on residues H382 and K509.

The protein belongs to the GPI family.

The protein resides in the cytoplasm. The catalysed reaction is alpha-D-glucose 6-phosphate = beta-D-fructose 6-phosphate. It functions in the pathway carbohydrate biosynthesis; gluconeogenesis. Its pathway is carbohydrate degradation; glycolysis; D-glyceraldehyde 3-phosphate and glycerone phosphate from D-glucose: step 2/4. Catalyzes the reversible isomerization of glucose-6-phosphate to fructose-6-phosphate. This is Glucose-6-phosphate isomerase from Coxiella burnetii (strain CbuG_Q212) (Coxiella burnetii (strain Q212)).